A 690-amino-acid chain; its full sequence is NF-kappa-B-repressing factor (690 aa).

Residues 1 to 296 (MEKILHMAEG…FKHIIGEDLV (296 aa)) are active repression domain. A Nuclear localization signal motif is present at residues 25–45 (KPSKGQKRYLSTYDGQNPPKK). Disordered stretches follow at residues 27-49 (SKGQKRYLSTYDGQNPPKKQAGS), 65-85 (SSSKAERQEDPYGPQTKDVNG), and 133-160 (YFDSGNPAPSSTSQQANCQPAPEPPPSQ). K68 is covalently cross-linked (Glycyl lysine isopeptide (Lys-Gly) (interchain with G-Cter in SUMO2)). The span at 139-150 (PAPSSTSQQANC) shows a compositional bias: polar residues. Residues 296-388 (VVCQIGMLSY…RVFLQDHCLA (93 aa)) mediate DNA binding. Residues 414–425 (PTYPSVKSSQCH) are compositionally biased toward polar residues. Residues 414-436 (PTYPSVKSSQCHSGSSPKGSGKK) form a disordered region. Residue K500 forms a Glycyl lysine isopeptide (Lys-Gly) (interchain with G-Cter in SUMO2) linkage. A G-patch domain is found at 551–596 (EDNIGNQLLRKMGWTGGGLGKSGEGIREPISVKEQHKREGLGLDVE). In terms of domain architecture, R3H spans 600–664 (KIAKRDIEQI…DRYLVVGRKR (65 aa)). S618 carries the post-translational modification Phosphoserine. Glycyl lysine isopeptide (Lys-Gly) (interchain with G-Cter in SUMO2) cross-links involve residues K666 and K674.

In terms of assembly, interacts with NF-kappa-B. Interacts with XRN2. Interacts (via G-patch domain) with DHX15; promoting the RNA helicase activity of DHX15.

Its subcellular location is the nucleus. The protein localises to the nucleolus. Its function is as follows. Enhances the ATPase activity of DHX15 by acting like a brace that tethers mobile sections of DHX15 together, stabilizing a functional conformation with high RNA affinity of DHX15. Involved in the constitutive silencing of the interferon beta promoter, independently of the virus-induced signals, and in the inhibition of the basal and cytokine-induced iNOS promoter activity. Also involved in the regulation of IL-8 transcription. May also act as a DNA-binding transcription regulator: interacts with a specific negative regulatory element (NRE) 5'-AATTCCTCTGA-3' to mediate transcriptional repression of certain NK-kappa-B responsive genes. This is NF-kappa-B-repressing factor (Nkrf) from Mus musculus (Mouse).